The chain runs to 576 residues: Rho GTPase-activating protein gacP (576 aa).

Residues L123–D189 adopt a coiled-coil conformation. A Rho-GAP domain is found at E277–F462. The tract at residues V472 to D576 is disordered. A compositionally biased stretch (low complexity) spans N482 to S500. The span at A501–T513 shows a compositional bias: polar residues. Low complexity predominate over residues N514–N530. Positions S565–D576 are enriched in acidic residues.

The protein resides in the cytoplasm. Rho GTPase-activating protein involved in the signal transduction pathway. The sequence is that of Rho GTPase-activating protein gacP (gacP) from Dictyostelium discoideum (Social amoeba).